We begin with the raw amino-acid sequence, 1203 residues long: Exonuclease/helicase subunit RexA (1203 aa).

A UvrD-like helicase ATP-binding domain is found at 4-472 (VKLTPEQNEA…IRLKENFRSR (469 aa)). 25–32 (ASAGSGKT) is an ATP binding site. In terms of domain architecture, UvrD-like helicase C-terminal spans 503 to 785 (VQGNISDYPV…RVMTFHKSKG (283 aa)).

This sequence belongs to the helicase family. AddA subfamily. Heterodimer of RexA (AddA) and RexB. Requires Mg(2+) as cofactor.

The enzyme catalyses Couples ATP hydrolysis with the unwinding of duplex DNA by translocating in the 3'-5' direction.. It catalyses the reaction ATP + H2O = ADP + phosphate + H(+). Functionally, the heterodimer acts both as an ATP-dependent DNA helicase and an ATP-dependent, dual-direction single-stranded exonuclease. Recognizes the L.lactis chi site (5'-GCGCGTG-3'), which stimulates homologous recombination. The RexA (AddA) nuclease domain is required for chi fragment generation; this subunit has 3'-&gt;5' exonuclease activity and probably also performs the helicase function. The protein is Exonuclease/helicase subunit RexA of Lactococcus lactis subsp. cremoris (strain MG1363).